We begin with the raw amino-acid sequence, 231 residues long: Class II histocompatibility antigen, B-L beta chain (231 aa).

A beta-1 region spans residues 1–89 (FFQWSATVEC…IVAPLTLQRR (89 aa)). Over 1–194 (FFQWSATVEC…PGDVSRSKLL (194 aa)) the chain is Extracellular. Intrachain disulfides connect cysteine 10–cysteine 74 and cysteine 111–cysteine 167. Asparagine 14 carries an N-linked (GlcNAc...) asparagine glycan. The segment at 90–182 (EPKVRIFALQ…SLQQPITQRW (93 aa)) is beta-2. The Ig-like C1-type domain maps to 91–179 (PKVRIFALQS…EHTSLQQPIT (89 aa)). The connecting peptide stretch occupies residues 183-194 (EPPGDVSRSKLL). Residues 195 to 219 (MGVGGFVLGLVYLALGIFFFLCSKK) traverse the membrane as a helical segment. The Cytoplasmic segment spans residues 220-231 (GQPDPTSPGILN).

The protein belongs to the MHC class II family.

The protein resides in the membrane. The polypeptide is Class II histocompatibility antigen, B-L beta chain (Gallus gallus (Chicken)).